Here is a 231-residue protein sequence, read N- to C-terminus: PIAGSMVLAAILLKLGGYGIIRMMQILPTTKTDLFLPFIVLALWGAILANLTCLQQTDLKSLIAYSSISHMGLVVAAIIIQSPWGLSGAMALMIAHGFTSSALFCLANTTYERTHTRILILTRGFHNILPMATTWWLLANLMNIATPPTLNFTSELLIMSTLFNWCPTTIILLGLSMLITASYSLHMFLSSQMGPTPLNNQTEPTHSREHLLMTLHLAPLMMISMKPELII.

The next 6 membrane-spanning stretches (helical) occupy residues 1-21 (PIAG…YGII), 34-54 (LFLP…LTCL), 61-80 (SLIA…AIII), 84-106 (WGLS…LFCL), 128-148 (ILPM…ATPP), and 169-189 (TIIL…HMFL).

It belongs to the complex I subunit 4 family.

Its subcellular location is the mitochondrion membrane. It catalyses the reaction a ubiquinone + NADH + 5 H(+)(in) = a ubiquinol + NAD(+) + 4 H(+)(out). Core subunit of the mitochondrial membrane respiratory chain NADH dehydrogenase (Complex I) that is believed to belong to the minimal assembly required for catalysis. Complex I functions in the transfer of electrons from NADH to the respiratory chain. The immediate electron acceptor for the enzyme is believed to be ubiquinone. The sequence is that of NADH-ubiquinone oxidoreductase chain 4 (MT-ND4) from Metlapilcoatlus nummifer (Mexican jumping pitviper).